The following is a 131-amino-acid chain: UPF0212 protein TK1194 (131 aa).

Belongs to the UPF0212 family.

The protein is UPF0212 protein TK1194 of Thermococcus kodakarensis (strain ATCC BAA-918 / JCM 12380 / KOD1) (Pyrococcus kodakaraensis (strain KOD1)).